Consider the following 312-residue polypeptide: DNA-directed RNA polymerase subunit alpha (312 aa).

Residues 1 to 229 form an alpha N-terminal domain (alpha-NTD) region; sequence MLQYQIDRIE…ELFQPLATVT (229 aa). The tract at residues 246 to 312 is alpha C-terminal domain (alpha-CTD); it reads IPLEELNLSV…ISIPQSRTSA (67 aa).

It belongs to the RNA polymerase alpha chain family. In terms of assembly, in cyanobacteria the RNAP catalytic core is composed of 2 alpha, 1 beta, 1 beta', 1 gamma and 1 omega subunit. When a sigma factor is associated with the core the holoenzyme is formed, which can initiate transcription.

The enzyme catalyses RNA(n) + a ribonucleoside 5'-triphosphate = RNA(n+1) + diphosphate. Its function is as follows. DNA-dependent RNA polymerase catalyzes the transcription of DNA into RNA using the four ribonucleoside triphosphates as substrates. The sequence is that of DNA-directed RNA polymerase subunit alpha from Prochlorococcus marinus (strain SARG / CCMP1375 / SS120).